The primary structure comprises 487 residues: Probable Xaa-Pro aminopeptidase CPSG_02684 (487 aa).

A compositionally biased stretch (polar residues) spans 1 to 10; that stretch reads MAGSNTLSSS. The segment at 1-22 is disordered; it reads MAGSNTLSSSEHGDDPRGHSYS. The Mn(2+) site is built by Asp-275, Asp-286, Glu-421, and Glu-460.

Belongs to the peptidase M24B family. Requires Mn(2+) as cofactor.

It catalyses the reaction Release of any N-terminal amino acid, including proline, that is linked to proline, even from a dipeptide or tripeptide.. Catalyzes the removal of a penultimate prolyl residue from the N-termini of peptides. The sequence is that of Probable Xaa-Pro aminopeptidase CPSG_02684 from Coccidioides posadasii (strain RMSCC 757 / Silveira) (Valley fever fungus).